A 120-amino-acid polypeptide reads, in one-letter code: NAD(P)H-quinone oxidoreductase subunit 3, chloroplastic (120 aa).

The next 3 membrane-spanning stretches (helical) occupy residues 10–30 (FWAF…TSSL), 64–84 (MFAL…PWAM), and 89–109 (LGVL…IGLV).

This sequence belongs to the complex I subunit 3 family. In terms of assembly, NDH is composed of at least 16 different subunits, 5 of which are encoded in the nucleus.

The protein localises to the plastid. It is found in the chloroplast thylakoid membrane. It carries out the reaction a plastoquinone + NADH + (n+1) H(+)(in) = a plastoquinol + NAD(+) + n H(+)(out). The catalysed reaction is a plastoquinone + NADPH + (n+1) H(+)(in) = a plastoquinol + NADP(+) + n H(+)(out). Functionally, NDH shuttles electrons from NAD(P)H:plastoquinone, via FMN and iron-sulfur (Fe-S) centers, to quinones in the photosynthetic chain and possibly in a chloroplast respiratory chain. The immediate electron acceptor for the enzyme in this species is believed to be plastoquinone. Couples the redox reaction to proton translocation, and thus conserves the redox energy in a proton gradient. The protein is NAD(P)H-quinone oxidoreductase subunit 3, chloroplastic of Zygnema circumcarinatum (Green alga).